A 130-amino-acid chain; its full sequence is Fluoride-specific ion channel FluC (130 aa).

4 consecutive transmembrane segments (helical) span residues 2 to 22 (GLLL…RFAL), 36 to 56 (GILL…AFLI), 71 to 91 (FLLV…SLDI), and 100 to 120 (IFIA…AVIL). Gly-79 and Thr-82 together coordinate Na(+).

Belongs to the fluoride channel Fluc/FEX (TC 1.A.43) family.

The protein resides in the cell inner membrane. It catalyses the reaction fluoride(in) = fluoride(out). Its activity is regulated as follows. Na(+) is not transported, but it plays an essential structural role and its presence is essential for fluoride channel function. Its function is as follows. Fluoride-specific ion channel. Important for reducing fluoride concentration in the cell, thus reducing its toxicity. This chain is Fluoride-specific ion channel FluC, found in Francisella tularensis subsp. tularensis (strain FSC 198).